A 366-amino-acid polypeptide reads, in one-letter code: Protein U1 (366 aa).

The protein belongs to the herpesviridae US22 family.

The protein is Protein U1 (U1) of Human herpesvirus 6A (strain Uganda-1102) (HHV-6 variant A).